Here is a 982-residue protein sequence, read N- to C-terminus: ATP-dependent DNA helicase Q5 (982 aa).

The region spanning 39 to 213 is the Helicase ATP-binding domain; sequence MAVVKGAEDV…FAALHLKQPV (175 aa). Residue 52–59 coordinates ATP; the sequence is MPTGAGKS. The DEAH box motif lies at 157-160; sequence DEAH. Residues 241–398 enclose the Helicase C-terminal domain; it reads NLRDFCLKAL…NKPSDKATLL (158 aa). Zn(2+) is bound by residues Cys412, Cys428, Cys432, and Cys435. Phosphoserine is present on residues Ser489 and Ser492. The interval 491–621 is interaction with POLR2A; sequence GSGDEGRDEA…ASKDGQLYDM (131 aa). Thr527 is modified (phosphothreonine). Positions 653-726 are interaction with RAD51; the sequence is PKRVGAGFSK…ALGSSVNCGD (74 aa). Disordered stretches follow at residues 675 to 797 and 812 to 893; these read GKSH…PGKC and QTEG…AQEP. At Ser728 the chain carries Phosphoserine; by CDK1.

The protein belongs to the helicase family. RecQ subfamily. As to quaternary structure, monomer. Interacts with TOP2A, TOP3A and TOP3B. Interacts with RNA polymerase II subunit POLR2A. Identified in a complex with the RNA polymerase II core bound to DNA. Interacts with RAD51. Interacts with WRN; this interaction stimulates WRN helicase activity on DNA fork duplexes. Interacts with MUS1; this interaction promotes MUS81-dependent mitotic DNA synthesis. Zn(2+) serves as cofactor. Phosphorylated by CDK1 at Ser-728; this phosphorylation is required for RECQL5-mediated disruption of RAD51 filaments on stalled replication forks.

Its subcellular location is the nucleus. It localises to the nucleoplasm. The catalysed reaction is Couples ATP hydrolysis with the unwinding of duplex DNA by translocating in the 3'-5' direction.. It carries out the reaction ATP + H2O = ADP + phosphate + H(+). In terms of biological role, DNA helicase that plays an important role in DNA replication, transcription and repair. Binds to the RNA polymerase II subunit POLR2A during transcription elongation and suppresses transcription-associated genomic instability. Also associates with POLR1A and enforces the stability of ribosomal DNA arrays. Plays an important role in mitotic chromosome separation after cross-over events and cell cycle progress. Mechanistically, removes RAD51 filaments protecting stalled replication forks at common fragile sites and stimulates MUS81-EME1 endonuclease leading to mitotic DNA synthesis. Required for efficient DNA repair, including repair of inter-strand cross-links. Stimulates DNA decatenation mediated by TOP2A. Prevents sister chromatid exchange and homologous recombination. The chain is ATP-dependent DNA helicase Q5 (Recql5) from Mus musculus (Mouse).